The following is a 187-amino-acid chain: Prepronociceptin (187 aa).

The signal sequence occupies residues 1–19; that stretch reads MKILFCDVLLLSLLSSVFS. Residues 20–95 constitute a propeptide that is removed on maturation; that stretch reads SCPRDCLTCQ…QPKASEMQHL (76 aa). 3 repeat units span residues 109-114, 115-120, and 121-126. The segment at 109–126 is 3 X 6 AA tandem repeats of D-A-E-P-G-A; sequence DAEPGADAEPGADAEPGA. Residues 109–133 form a disordered region; that stretch reads DAEPGADAEPGADAEPGADDAEEVE. The segment covering 112 to 131 has biased composition (acidic residues); sequence PGADAEPGADAEPGADDAEE. The propeptide occupies 180-187; that stretch reads TLHQNGNV.

Belongs to the opioid neuropeptide precursor family. In terms of processing, specific enzymatic cleavages at paired basic residues probably yield other active peptides besides nociceptin. Post-translationally, the N-terminal domain contains 6 conserved cysteines thought to be involved in disulfide bonding and/or processing. In terms of tissue distribution, brain and spinal cord. Low levels in kidney and spleen.

The protein localises to the secreted. In terms of biological role, ligand of the opioid receptor-like receptor OPRL1. It may act as a transmitter in the brain by modulating nociceptive and locomotor behavior. May be involved in neuronal differentiation and development. When administered intracerebroventricularly, nociceptin induces hyperalgesia and decreases locomotor activity. Functionally, blocks nociceptin action in pain transmission by inhibiting nociceptin-induced hyperalgesia and allodynia. Its function is as follows. Has potent analgesic activity. The sequence is that of Prepronociceptin (Pnoc) from Mus musculus (Mouse).